The primary structure comprises 378 residues: Ribosomal RNA large subunit methyltransferase G (378 aa).

This sequence belongs to the methyltransferase superfamily. RlmG family.

It localises to the cytoplasm. It catalyses the reaction guanosine(1835) in 23S rRNA + S-adenosyl-L-methionine = N(2)-methylguanosine(1835) in 23S rRNA + S-adenosyl-L-homocysteine + H(+). Its function is as follows. Specifically methylates the guanine in position 1835 (m2G1835) of 23S rRNA. The sequence is that of Ribosomal RNA large subunit methyltransferase G from Salmonella agona (strain SL483).